Consider the following 1040-residue polypeptide: MSNDREVPTLSQLNTTVSRDKDVSDTLSPDFDSKGSATGRDGGNFPMYIAINEYFKRMEDELDMKPGDKIKVITDDEEYKDGWYFGRNLRTNEEGLYPVVFTQKITVEKAPTLMRAKSTKRIYSPLTNEDPLLSSTFISENDSNSELPTPQPIETAASISRTANGKIERNLSLKNTMSDIDNALLEFKDDSIGPPDRFINSGRDEEHSITHETILSATDGLDVVESNSKPTTSSSTGFLNGDLENQATLINGIDTTKLNPVEAEFWSPEEITAYFIMEGYDVQSASRFQKHKISGKILLELELVHLKELDINSFGTRFEIFKEIEKIKEAIRTNGRSLNRASKTNNANIYNQLMPPANVDQRASYRGHVRKTSQSLEDLPSQQNFIPTPRNTRNSSASKHRPKSLVFDSQEANANIAPDVQIPQVVEEMAGNENLFVSPRRAPKPPSYPSPAQPPKSPLLNNTRTSPSPAQLYSWQSPTLSFSGPKRTSYIDQYSSSDSNFNSRSALPKNNQGGGKALSPIPSPTRNSVRNEDSEGKLTSSSKRNSVPYYGYAPESSSDRKSSCSSHEEEQFQETMNTFERPTSSIYADGSTIASISNDKLAHEKEGKKKPTRHSSSLSSKSKSDSRRNSSLKRSSSASRTSSFKKSSFMLSPFRQQFTDNAARSSSPEENPITSMPSEKNSSPIVDKKSSKKSRSKRRSVSAKEAEIFTETVKDDKNKRSASEAIKGETLKGKSLRQMTARPVAKKKQTSAFIEGLRSISVKEAMKDADFSGWMSKKGSGAMSTWKTRFFTLHGTRLSYFSSTTDTRERGLIDITAHRVVPAKEDDKLVSLYAASTGKGRYCFKLLPPQPGSKKGLTFTQPRTHYFAVDNKEEMRGWMAALIKTTIDIDTSVPIISSYTTPTVSLSKAQEMLAEAREETKLREQQMLENEEDEDQFLWDQQQLQQQQHDNNQGQADRTISASTQRTSDEDNTISTPNLSSANNTTIGSNGFSSPFLLASGLLSPGVARNSSMRGTEKKGKFSTEEDYFGDNSKHKTDKI.

Residues methionine 1–glycine 39 form a disordered region. The span at proline 8–valine 17 shows a compositional bias: polar residues. A phosphoserine mark is found at serine 18, serine 24, and serine 28. One can recognise an SH3 domain in the interval glycine 43–valine 107. Residues tryptophan 266–alanine 330 form the SAM domain. Disordered stretches follow at residues tyrosine 365–alanine 412, valine 437–proline 478, and isoleucine 491–valine 744. Positions threonine 372–alanine 397 are enriched in polar residues. Residues lysine 444–serine 457 show a composition bias toward pro residues. Serine 450 bears the Phosphoserine mark. Residues leucine 459–proline 478 are compositionally biased toward polar residues. Over residues serine 495–serine 505 the composition is skewed to low complexity. A phosphoserine mark is found at serine 519, serine 523, and serine 546. Basic and acidic residues predominate over residues serine 557–glutamate 570. Residues glutamine 573–asparagine 598 show a composition bias toward polar residues. Over residues lysine 600–lysine 609 the composition is skewed to basic and acidic residues. Residues leucine 632–serine 648 are compositionally biased toward low complexity. A Phosphoserine modification is found at serine 652. Positions phenylalanine 654–proline 684 are enriched in polar residues. The segment covering serine 690–valine 701 has biased composition (basic residues). Over residues serine 702 to lysine 732 the composition is skewed to basic and acidic residues. The region spanning aspartate 768–isoleucine 887 is the PH domain. Low complexity predominate over residues glutamine 943–aspartate 957. 2 disordered regions span residues glutamine 943–threonine 986 and valine 1007–isoleucine 1040. Positions threonine 973–threonine 986 are enriched in polar residues. The segment covering glycine 1015 to threonine 1024 has biased composition (basic and acidic residues).

As to quaternary structure, interacts with BEM1. Interacts with TOS7.

It localises to the bud. It is found in the bud neck. In terms of biological role, protein involved in bud formation. Functions redundantly with BOI1 to promote the fusion of secretory vesicles with the plasma membrane at sites of polarized growth. Acts as an abscission inhibitor during cytokinesis in response to chromatin bridges. In Saccharomyces cerevisiae (strain ATCC 204508 / S288c) (Baker's yeast), this protein is BEM1-interacting protein 2.